We begin with the raw amino-acid sequence, 108 residues long: UPF0145 protein MADE_1007770 (108 aa).

The protein belongs to the UPF0145 family.

This is UPF0145 protein MADE_1007770 from Alteromonas mediterranea (strain DSM 17117 / CIP 110805 / LMG 28347 / Deep ecotype).